Reading from the N-terminus, the 1199-residue chain is DNA-directed RNA polymerase subunit beta' (1199 aa).

Residues cysteine 60, cysteine 62, cysteine 75, and cysteine 78 each coordinate Zn(2+). Mg(2+) is bound by residues aspartate 449, aspartate 451, and aspartate 453. Zn(2+) is bound by residues cysteine 818, cysteine 892, cysteine 899, and cysteine 902.

This sequence belongs to the RNA polymerase beta' chain family. In terms of assembly, the RNAP catalytic core consists of 2 alpha, 1 beta, 1 beta' and 1 omega subunit. When a sigma factor is associated with the core the holoenzyme is formed, which can initiate transcription. Requires Mg(2+) as cofactor. Zn(2+) serves as cofactor.

The catalysed reaction is RNA(n) + a ribonucleoside 5'-triphosphate = RNA(n+1) + diphosphate. Functionally, DNA-dependent RNA polymerase catalyzes the transcription of DNA into RNA using the four ribonucleoside triphosphates as substrates. This chain is DNA-directed RNA polymerase subunit beta', found in Geobacillus kaustophilus (strain HTA426).